Consider the following 374-residue polypeptide: Alanine racemase (374 aa).

Residue K35 is the Proton acceptor; specific for D-alanine of the active site. K35 is modified (N6-(pyridoxal phosphate)lysine). Residue R133 coordinates substrate. The active-site Proton acceptor; specific for L-alanine is the Y261. Residue M315 coordinates substrate.

The protein belongs to the alanine racemase family. Requires pyridoxal 5'-phosphate as cofactor.

It carries out the reaction L-alanine = D-alanine. It functions in the pathway amino-acid biosynthesis; D-alanine biosynthesis; D-alanine from L-alanine: step 1/1. Functionally, catalyzes the interconversion of L-alanine and D-alanine. May also act on other amino acids. This is Alanine racemase (alr) from Psychrobacter sp. (strain PRwf-1).